The chain runs to 643 residues: 1-deoxy-D-xylulose-5-phosphate synthase (643 aa).

Residues histidine 72 and 113-115 (GHA) each bind thiamine diphosphate. Mg(2+) is bound at residue aspartate 144. Residues 145–146 (GA), asparagine 174, tyrosine 287, and glutamate 370 each bind thiamine diphosphate. Mg(2+) is bound at residue asparagine 174.

It belongs to the transketolase family. DXPS subfamily. As to quaternary structure, homodimer. Requires Mg(2+) as cofactor. Thiamine diphosphate is required as a cofactor.

The enzyme catalyses D-glyceraldehyde 3-phosphate + pyruvate + H(+) = 1-deoxy-D-xylulose 5-phosphate + CO2. The protein operates within metabolic intermediate biosynthesis; 1-deoxy-D-xylulose 5-phosphate biosynthesis; 1-deoxy-D-xylulose 5-phosphate from D-glyceraldehyde 3-phosphate and pyruvate: step 1/1. Catalyzes the acyloin condensation reaction between C atoms 2 and 3 of pyruvate and glyceraldehyde 3-phosphate to yield 1-deoxy-D-xylulose-5-phosphate (DXP). This Prochlorococcus marinus (strain MIT 9211) protein is 1-deoxy-D-xylulose-5-phosphate synthase.